Consider the following 158-residue polypeptide: Molybdopterin synthase catalytic subunit (158 aa).

Residues 107–108 (HR), K123, and 130–132 (KKE) contribute to the substrate site.

The protein belongs to the MoaE family. MOCS2B subfamily. In terms of assembly, heterotetramer; composed of 2 small (mocs2s) and 2 large (mocs2l) subunits.

It is found in the cytoplasm. It catalyses the reaction 2 [molybdopterin-synthase sulfur-carrier protein]-C-terminal-Gly-aminoethanethioate + cyclic pyranopterin phosphate + H2O = molybdopterin + 2 [molybdopterin-synthase sulfur-carrier protein]-C-terminal Gly-Gly + 2 H(+). Its pathway is cofactor biosynthesis; molybdopterin biosynthesis. In terms of biological role, catalytic subunit of the molybdopterin synthase complex, a complex that catalyzes the conversion of precursor Z into molybdopterin. Acts by mediating the incorporation of 2 sulfur atoms from thiocarboxylated mocs2s into precursor Z to generate a dithiolene group. The sequence is that of Molybdopterin synthase catalytic subunit (mocs2l) from Dictyostelium discoideum (Social amoeba).